Consider the following 47-residue polypeptide: Large ribosomal subunit protein bL34 (47 aa).

The protein belongs to the bacterial ribosomal protein bL34 family.

This chain is Large ribosomal subunit protein bL34, found in Rhodococcus erythropolis (strain PR4 / NBRC 100887).